The following is a 603-amino-acid chain: Vacuolar protein sorting-associated protein 33A (603 aa).

It belongs to the STXBP/unc-18/SEC1 family. In terms of assembly, probable component of the homotypic fusion and vacuole protein sorting (HOPS) complex consisting of the core class C Vps proteins vps-11, vps-16, vps-18, and which further associates with vps-33.1, vps-39 and vps-41. Interacts with spe-39. Ubiquitously expressed at high levels in somatic tissues including the pharynx, muscles, hypodermis, neurons, coelomocytes and spermatheca. Expressed in the intestine.

The protein localises to the lysosome. Its subcellular location is the early endosome. It is found in the late endosome. The protein resides in the apical cell membrane. Plays a role in vesicle-mediated protein trafficking to lysosomal compartments including the endocytic membrane transport pathways. Believed to act as a component of the putative HOPS endosomal tethering complex which is proposed to be involved in the rab-5-to-rab-7 endosome conversion probably implicating sand-1, and via binding SNAREs and SNARE complexes to mediate tethering and docking events during SNARE-mediated membrane fusion. The HOPS complex is proposed to be recruited to rab-7 on the late endosomal membrane and to regulate late endocytic, phagocytic and autophagic traffic towards lysosomes. Within the HOPS complex, contributes to the normal development of gut granules in embryonic and adult intestinal cells. Required for endosome/lysosome fusion. Required for early embryonic development. This is Vacuolar protein sorting-associated protein 33A from Caenorhabditis elegans.